The sequence spans 1005 residues: MKLLSVAAVALLAAQAAGASIKHRLNGFTILEHPDPAKRDLLQDIVTWDDKSLFINGERIMLFSGEVHPFRLPVPSLWLDIFHKIRALGFNCVSFYIDWALLEGKPGDYRAEGIFALEPFFDAAKEAGIYLIARPGSYINAEVSGGGFPGWLQRVNGTLRSSDEPFLKATDNYIANAAAAVAKAQITNGGPVILYQPENEYSGGCCGVKYPDADYMQYVMDQARKADIVVPFISNDASPSGHNAPGSGTGAVDIYGHDSYPLGFDCANPSVWPEGKLPDNFRTLHLEQSPSTPYSLLEFQAGAFDPWGGPGFEKCYALVNHEFSRVFYRNDLSFGVSTFNLYMTFGGTNWGNLGHPGGYTSYDYGSPITETRNVTREKYSDIKLLANFVKASPSYLTATPRNLTTGVYTDTSDLAVTPLIGDSPGSFFVVRHTDYSSQESTSYKLKLPTSAGNLTIPQLEGTLSLNGRDSKIHVVDYNVSGTNIIYSTAEVFTWKKFDGNKVLVLYGGPKEHHELAIASKSNVTIIEGSDSGIVSTRKGSSVIIGWDVSSTRRIVQVGDLRVFLLDRNSAYNYWVPELPTEGTSPGFSTSKTTASSIIVKAGYLLRGAHLDGADLHLTADFNATTPIEVIGAPTGAKNLFVNGEKASHTVDKNGIWSSEVKYAAPEIKLPGLKDLDWKYLDTLPEIKSSYDDSAWVSADLPKTKNTHRPLDTPTSLYSSDYGFHTGYLIYRGHFVANGKESEFFIRTQGGSAFGSSVWLNETYLGSWTGADYAMDGNSTYKLSQLESGKNYVITVVIDNLGLDENWTVGEETMKNPRGILSYKLSGQDASAITWKLTGNLGGEDYQDKVRGPLNEGGLYAERQGFHQPQPPSESWESGSPLEGLSKPGIGFYTAQFDLDLPKGWDVPLYFNFGNNTQAARAQLYVNGYQYGKFTGNVGPQTSFPVPEGILNYRGTNYVALSLWALESDGAKLGSFELSYTTPVLTGYGNVESPEQPKYEQRKGAY.

An N-terminal signal peptide occupies residues 1–18 (MKLLSVAAVALLAAQAAG). Substrate-binding residues include Tyr96, Asn140, Ala141, and Glu142. An N-linked (GlcNAc...) asparagine glycan is attached at Asn156. Asn199 serves as a coordination point for substrate. Glu200 acts as the Proton donor in catalysis. The cysteines at positions 205 and 206 are disulfide-linked. Tyr260 is a binding site for substrate. A disulfide bridge connects residues Cys266 and Cys315. The active-site Nucleophile is the Glu298. Tyr364 provides a ligand contact to substrate. 10 N-linked (GlcNAc...) asparagine glycosylation sites follow: Asn373, Asn402, Asn453, Asn478, Asn522, Asn622, Asn760, Asn777, Asn805, and Asn914.

It belongs to the glycosyl hydrolase 35 family.

Its subcellular location is the secreted. The enzyme catalyses Hydrolysis of terminal non-reducing beta-D-galactose residues in beta-D-galactosides.. In terms of biological role, cleaves beta-linked terminal galactosyl residues from gangliosides, glycoproteins, and glycosaminoglycans. The chain is Probable beta-galactosidase A (lacA) from Aspergillus flavus (strain ATCC 200026 / FGSC A1120 / IAM 13836 / NRRL 3357 / JCM 12722 / SRRC 167).